The primary structure comprises 464 residues: Soluble pyridine nucleotide transhydrogenase (464 aa).

An FAD-binding site is contributed by 35 to 44; it reads DSRRQVGGNC.

The protein belongs to the class-I pyridine nucleotide-disulfide oxidoreductase family. Requires FAD as cofactor.

It localises to the cytoplasm. The enzyme catalyses NAD(+) + NADPH = NADH + NADP(+). Conversion of NADPH, generated by peripheral catabolic pathways, to NADH, which can enter the respiratory chain for energy generation. In Pseudomonas fluorescens (strain ATCC BAA-477 / NRRL B-23932 / Pf-5), this protein is Soluble pyridine nucleotide transhydrogenase.